A 368-amino-acid chain; its full sequence is Protein mab-21-like (368 aa).

It belongs to the mab-21 family.

This Drosophila melanogaster (Fruit fly) protein is Protein mab-21-like.